We begin with the raw amino-acid sequence, 437 residues long: Probable N-acetylmuramidase (437 aa).

A signal peptide spans 1–57; the sequence is MPVSRVKVKNRHLKKKTKKPLAFYKPATKFAGAVLIAGTLTTTHELLLQQTSPMVQA. Disordered stretches follow at residues 217–244, 290–320, and 367–392; these read SSAG…SSTT, ASST…SQTT, and AASN…NSNA. The LysM 1 domain occupies 243–286; it reads TTYTVKSGDTLWGISQRYGISVAQIQSANNLKSTIIYIGQKLVL. Low complexity predominate over residues 290–317; sequence ASSTNSGGSNNSASTTPTTSVTPAKPTS. The 44-residue stretch at 319-362 folds into the LysM 2 domain; that stretch reads TTVKVKSGDTLWALSVKYKTSIAQLKSWNHLSSDTIYIGQNLIV. Positions 393–436 constitute a LysM 3 domain; sequence SIHKVVKGDTLWGLSQKSGSPIASIKAWNHLSSDTILIGQYLRI.

This sequence belongs to the glycosyl hydrolase 73 family.

It localises to the secreted. It catalyses the reaction Hydrolysis of (1-&gt;4)-beta-linkages between N-acetylmuramic acid and N-acetyl-D-glucosamine residues in a peptidoglycan and between N-acetyl-D-glucosamine residues in chitodextrins.. Its function is as follows. Hydrolyzes the cell wall of L.lactis and M.lysodeikticus. Required for cell separation during growth. The protein is Probable N-acetylmuramidase (acmA) of Lactococcus lactis subsp. cremoris (strain MG1363).